Consider the following 634-residue polypeptide: Chaperone protein DnaK (634 aa).

A Phosphothreonine; by autocatalysis modification is found at threonine 193. The disordered stretch occupies residues 597–634 (GNANNTSSTESTTTNNNNEEDSKVVDSDYQEIDKKDGK). Low complexity predominate over residues 600-613 (NNTSSTESTTTNNN). Positions 616 to 634 (EDSKVVDSDYQEIDKKDGK) are enriched in basic and acidic residues.

The protein belongs to the heat shock protein 70 family.

Acts as a chaperone. This Ehrlichia canis (strain Jake) protein is Chaperone protein DnaK.